Reading from the N-terminus, the 1347-residue chain is G-protein coupled receptor-associated sorting protein 1 (1347 aa).

3 disordered regions span residues 1–75 (MTRA…AYAK), 145–174 (ESIPKKANSPAGFQPSYGSEEGTNMGSWYR), and 188–281 (DFKW…NSRS). Residues 21 to 33 (ENANAAEVEPEAP) are compositionally biased toward low complexity. Over residues 211–226 (FRPRKSMKANNRFRHM) the composition is skewed to basic residues. A compositionally biased stretch (basic and acidic residues) spans 263–278 (PKDKTKVWSKPKEEPN). Phosphoserine is present on Ser-295. Disordered regions lie at residues 310 to 344 (GEEAKSRSKPRARKGVNMRARQQAKREACSDAMSG), 364 to 396 (FSKSKTKKEPRTRAVPKEEVKTKARASTKQEAR), and 460 to 485 (QVSSFCLGSGKKSSMESGPKATSKSM). The segment covering 316–325 (RSKPRARKGV) has biased composition (basic residues). The span at 370 to 396 (KKEPRTRAVPKEEVKTKARASTKQEAR) shows a compositional bias: basic and acidic residues. Polar residues predominate over residues 461-484 (VSSFCLGSGKKSSMESGPKATSKS). Phosphoserine is present on residues Ser-619 and Ser-626. A Phosphothreonine modification is found at Thr-860. Phosphoserine is present on Ser-862.

Belongs to the GPRASP family. As to quaternary structure, interacts with cytoplasmic tails of a variety of G-protein coupled receptors such as delta opioid receptor/OPRD1, beta-2 adrenergic receptor/ADRB2 and D4 dopamine receptor/DRD4 as well as D2 dopamine receptor/DRD2. Interacts with PER1. Interacts with BECN2; the interaction is direct. In terms of tissue distribution, expressed in the brain, with higher expression in the hippocampus, hypothalamus and olfactory bulb.

It is found in the cytoplasm. Modulates lysosomal sorting and functional down-regulation of a variety of G-protein coupled receptors. Targets receptors for degradation in lysosomes via its interaction with BECN2. In Mus musculus (Mouse), this protein is G-protein coupled receptor-associated sorting protein 1 (Gprasp1).